The sequence spans 320 residues: MAPTSVSNARIEKAVLDAHEKQKNKHGGKNADYIPILAQVPSTLFGVSVATVDGQVFTAGDAGYEFALESISKIFTLALVIEQRGPRELRLKVGADPTGEAFNSVLALELHNDKPMSPLVNAGAISTTSLVDAVGPEDRWRQIVGAQSDFAGRQISISEEINASEQATNFHNRAIAWLLRGSGYIYCDPMEACDIYTRQCSTLVTTADLAVMGATLANGGTNPITGKRVIARKNVPHVLAEMTMEGVYTRSGDWAYTVGLPAKSGVGGGLVAVAPGQLAIAAFSPPLDKVGNSVRAQAAVAQIADTLQLGLFNVPGEEDE.

Positions 70, 121, 165, 172, 196, 248, and 266 each coordinate substrate.

It belongs to the glutaminase family. As to quaternary structure, homotetramer.

The catalysed reaction is L-glutamine + H2O = L-glutamate + NH4(+). This chain is Glutaminase, found in Mycobacterium marinum (strain ATCC BAA-535 / M).